Reading from the N-terminus, the 766-residue chain is Deoxynucleotidyltransferase terminal-interacting protein 2 (766 aa).

The tract at residues 1-99 is disordered; the sequence is MVVTRSARPQ…DCSSVPEVQD (99 aa). Polar residues-rich tracts occupy residues 13-28 and 42-56; these read NEAT…NSAV and SPDN…TTPE. Residue T127 is modified to Phosphothreonine. Residues S139, S143, and S146 each carry the phosphoserine modification. Positions 155-175 are disordered; sequence TEITTRRSKAKSQREPKQESH. Over residues 166-175 the composition is skewed to basic and acidic residues; it reads SQREPKQESH. Phosphoserine is present on residues S180 and S190. K217 is covalently cross-linked (Glycyl lysine isopeptide (Lys-Gly) (interchain with G-Cter in SUMO2)). T229 is subject to Phosphothreonine. Phosphoserine is present on residues S236, S248, and S250. K254 participates in a covalent cross-link: Glycyl lysine isopeptide (Lys-Gly) (interchain with G-Cter in SUMO2). S258 is modified (phosphoserine). A Glycyl lysine isopeptide (Lys-Gly) (interchain with G-Cter in SUMO2) cross-link involves residue K327. A Phosphoserine modification is found at S334. Disordered regions lie at residues 345-367, 390-450, and 520-557; these read VSQR…LNHE, KNAI…KDDS, and KAGE…DEDN. K394 is covalently cross-linked (Glycyl lysine isopeptide (Lys-Gly) (interchain with G-Cter in SUMO2)). The segment covering 421 to 434 has biased composition (basic and acidic residues); it reads DMSKEKEVDSESDT. Polar residues predominate over residues 435-444; that stretch reads KPSNLEFNTT. A coiled-coil region spans residues 515 to 552; the sequence is LDEEDKAGEVATEEEEEEEEEESEEELSDHDRNKDNEF. Residues 520–542 show a composition bias toward acidic residues; the sequence is KAGEVATEEEEEEEEEESEEELS. The tract at residues 558 to 615 is tdBR region; mediates interaction with DNTT; that stretch reads LLSNTKSKLLKLMSSSIDTGLNIKELGGLYINFNADKVQLNKRTLTQMKEKRKDELLQ. Glycyl lysine isopeptide (Lys-Gly) (interchain with G-Cter in SUMO2) cross-links involve residues K568, K594, and K616. At T620 the chain carries Phosphothreonine. Glycyl lysine isopeptide (Lys-Gly) (interchain with G-Cter in SUMO2) cross-links involve residues K636, K659, K668, K696, and K741.

In terms of assembly, forms a ternary complex with DNTT and core histone; interaction with PCNA releases DNTT and H2A/H2B histones from this ternary complex. Interacts with ESR1, ESR2, PPARG and RXRA. Part of the small subunit (SSU) processome, composed of more than 70 proteins and the RNA chaperone small nucleolar RNA (snoRNA) U3.

The protein localises to the nucleus. It is found in the nucleolus. Its function is as follows. Regulates the transcriptional activity of DNTT and ESR1. May function as a chromatin remodeling protein. Part of the small subunit (SSU) processome, first precursor of the small eukaryotic ribosomal subunit. During the assembly of the SSU processome in the nucleolus, many ribosome biogenesis factors, an RNA chaperone and ribosomal proteins associate with the nascent pre-rRNA and work in concert to generate RNA folding, modifications, rearrangements and cleavage as well as targeted degradation of pre-ribosomal RNA by the RNA exosome. The sequence is that of Deoxynucleotidyltransferase terminal-interacting protein 2 (DNTTIP2) from Bos taurus (Bovine).